Reading from the N-terminus, the 1450-residue chain is Auxilin-like protein 1 (1450 aa).

Disordered regions lie at residues 117-142, 241-318, 357-383, 459-480, 512-541, 556-575, 908-946, 961-1046, 1077-1168, 1192-1241, and 1254-1328; these read NEDK…GKKS, STRD…AESS, DSKI…SQIL, NSKQ…TKQE, SQKD…SQEM, EETP…EKSE, DRSE…RSSF, EQHR…ELEH, GAAT…ERKQ, AGKT…AERA, and AMEK…SDRA. The stretch at 316–344 forms a coiled coil; sequence ESSAALKKAIEEAQIRMNIAKQMMEKKKS. Residues 357-366 show a composition bias toward basic and acidic residues; the sequence is DSKIENKGNT. 7 stretches are compositionally biased toward basic and acidic residues: residues 512–524, 564–575, 908–923, 1037–1046, 1117–1131, 1147–1168, and 1192–1226; these read SQKD…EKEN, SKSEMNIEEKSE, DRSE…RFDQ, RNGDKKELEH, NMKE…RSSM, ETVE…ERKQ, and AGKT…KLSS. Coiled-coil stretches lie at residues 1142–1184 and 1219–1257; these read SQNK…RERA and EVND…AMEK. Residues 1270-1299 are compositionally biased toward low complexity; it reads SYGGSKSFSSSGERRGSSSSGTENKSSGPS. A compositionally biased stretch (basic and acidic residues) spans 1310 to 1328; the sequence is PIQRCKARSERHQRTSDRA. A coiled-coil region spans residues 1327 to 1355; that stretch reads RAAEALAEKKLRDLKTQKEQTERNRLAEA. The J domain maps to 1377 to 1450; the sequence is TLQYILGAES…AWNKFGADER (74 aa).

In Arabidopsis thaliana (Mouse-ear cress), this protein is Auxilin-like protein 1 (AUL1).